We begin with the raw amino-acid sequence, 305 residues long: Glycine--tRNA ligase alpha subunit (305 aa).

The protein belongs to the class-II aminoacyl-tRNA synthetase family. In terms of assembly, tetramer of two alpha and two beta subunits.

The protein resides in the cytoplasm. The enzyme catalyses tRNA(Gly) + glycine + ATP = glycyl-tRNA(Gly) + AMP + diphosphate. The chain is Glycine--tRNA ligase alpha subunit from Streptococcus pneumoniae (strain ATCC 700669 / Spain 23F-1).